We begin with the raw amino-acid sequence, 466 residues long: Chromogranin-A (466 aa).

Positions 1 to 18 (MRSSAALALLLCAGQVFA) are cleaved as a signal peptide. Cysteine 35 and cysteine 56 are oxidised to a cystine. Positions 91 to 443 (AQQQQQQQQQ…ANRRAEDQEL (353 aa)) are disordered. Low complexity predominate over residues 92-111 (QQQQQQQQQQQQQQQQQQQQ). At serine 114 the chain carries Phosphoserine. Positions 131–155 (KHGDAASEAPSKDTVEKREDSDKGQ) are enriched in basic and acidic residues. Residues 177–213 (ESSMMGNSQSPGEDTANNTQSPTSLPSQEHGIPQTTE) show a composition bias toward polar residues. Position 215 is a phosphoserine (serine 215). Positions 233–247 (KEEEEEEKEEEEEEK) are enriched in acidic residues. The span at 248 to 259 (EEKAIAREKAGP) shows a compositional bias: basic and acidic residues. Phosphoserine is present on residues serine 288 and serine 312. The segment covering 305 to 314 (GKGELEHSQQ) has biased composition (basic and acidic residues). At glycine 332 the chain carries Glycine amide. Basic and acidic residues predominate over residues 351-378 (RLSREWEDKRWSRMDQLAKELTAEKRLE). Phosphoserine occurs at positions 353 and 386. The residue at position 387 (methionine 387) is a Methionine sulfoxide. Over residues 412–440 (SSREDSVEARGDFEEKKEEEGSANRRAED) the composition is skewed to basic and acidic residues. Phosphoserine occurs at positions 413, 417, and 433. Serine 433 carries O-linked (Xyl...) (chondroitin sulfate) serine glycosylation. Glutamine 441 carries the pyrrolidone carboxylic acid modification. Serine 447 carries the phosphoserine modification.

It belongs to the chromogranin/secretogranin protein family. As to quaternary structure, self-interacts; self-assembly is promoted in vitro by chondroitin sulfate attachment which occurs at mildly acidic pH conditions. Interacts with SCG3; this interaction is optimal in conditions mimicking the lumenal milieu of the trans-Golgi network, i.e. pH 5.5 and 10 mM Ca(+2). Interacts with ITPR1 in the secretory granules. Post-translationally, O-glycosylated; contains chondroitin sulfate (CS). CS attachment is pH-dependent, being observed at mildly acidic conditions of pH 5 but not at neutral pH, and promotes self-assembly in vitro. As to expression, expressed in the brain and adrenal and pituitary glands.

Its subcellular location is the cytoplasmic vesicle. The protein resides in the secretory vesicle. It localises to the neuronal dense core vesicle. The protein localises to the secreted. Functionally, strongly inhibits glucose induced insulin release from the pancreas. Its function is as follows. Catestatin inhibits catecholamine release from chromaffin cells and noradrenergic neurons by acting as a non-competitive nicotinic cholinergic antagonist. Can induce mast cell migration, degranulation and production of cytokines and chemokines. In terms of biological role, serpinin regulates granule biogenesis in endocrine cells by up-regulating the transcription of protease nexin 1 (SERPINE2) via a cAMP-PKA-SP1 pathway. This leads to inhibition of granule protein degradation in the Golgi complex which in turn promotes granule formation. Serpinin and pGlu-serpinin can enhance both myocardial contractility (inotropy) and relaxation (lusitropy) and this cardio-stimulation requires a beta 1-adrenergic receptor/adenylate cyclase/cAMP/PKA pathway. This chain is Chromogranin-A (Chga), found in Rattus norvegicus (Rat).